A 305-amino-acid chain; its full sequence is Oxygen-dependent coproporphyrinogen-III oxidase (305 aa).

Ser93 is a substrate binding site. A divalent metal cation-binding residues include His97 and His107. His107 functions as the Proton donor in the catalytic mechanism. Position 109–111 (109–111) interacts with substrate; it reads NVR. His146 and His176 together coordinate a divalent metal cation. Residues 241-276 form an important for dimerization region; the sequence is YVEFNLVYDRGTLFGLQSGGRTESILMSLPPQVRWG. Residue 259–261 participates in substrate binding; that stretch reads GGR.

The protein belongs to the aerobic coproporphyrinogen-III oxidase family. As to quaternary structure, homodimer. A divalent metal cation is required as a cofactor.

Its subcellular location is the cytoplasm. The catalysed reaction is coproporphyrinogen III + O2 + 2 H(+) = protoporphyrinogen IX + 2 CO2 + 2 H2O. It functions in the pathway porphyrin-containing compound metabolism; protoporphyrin-IX biosynthesis; protoporphyrinogen-IX from coproporphyrinogen-III (O2 route): step 1/1. Its function is as follows. Involved in the heme biosynthesis. Catalyzes the aerobic oxidative decarboxylation of propionate groups of rings A and B of coproporphyrinogen-III to yield the vinyl groups in protoporphyrinogen-IX. The sequence is that of Oxygen-dependent coproporphyrinogen-III oxidase from Pseudomonas fluorescens (strain ATCC BAA-477 / NRRL B-23932 / Pf-5).